We begin with the raw amino-acid sequence, 624 residues long: Chaperone protein HtpG (624 aa).

The a; substrate-binding stretch occupies residues 1–338 (MNNKNKITHT…SQDLPLNISR (338 aa)). The segment at 339-552 (EILQDSSITH…TNDMSTQMAK (214 aa)) is b. The tract at residues 553–624 (IFSAAGQPIP…IQRINNFFIS (72 aa)) is c.

This sequence belongs to the heat shock protein 90 family. Homodimer.

Its subcellular location is the cytoplasm. In terms of biological role, molecular chaperone. Has ATPase activity. The sequence is that of Chaperone protein HtpG from Buchnera aphidicola subsp. Cinara cedri (strain Cc).